Here is a 407-residue protein sequence, read N- to C-terminus: Na(+)-translocating NADH-quinone reductase subunit F (407 aa).

The helical transmembrane segment at 3–23 threads the bilayer; that stretch reads IILGVVMFTLIVLALVLVILF. A 2Fe-2S ferredoxin-type domain is found at 32–126; sequence GDITISINGD…DMDIELPEEI (95 aa). The [2Fe-2S] cluster site is built by Cys69, Cys75, Cys78, and Cys110. The FAD-binding FR-type domain maps to 129–269; that stretch reads VKKWECTVIS…SGPFGEFFAK (141 aa). A catalytic region spans residues 272-389; the sequence is DAEMVFIGGG…PMMNAAVIGM (118 aa).

Belongs to the NqrF family. As to quaternary structure, composed of six subunits; NqrA, NqrB, NqrC, NqrD, NqrE and NqrF. The cofactor is [2Fe-2S] cluster. Requires FAD as cofactor.

The protein localises to the cell inner membrane. The catalysed reaction is a ubiquinone + n Na(+)(in) + NADH + H(+) = a ubiquinol + n Na(+)(out) + NAD(+). NQR complex catalyzes the reduction of ubiquinone-1 to ubiquinol by two successive reactions, coupled with the transport of Na(+) ions from the cytoplasm to the periplasm. The first step is catalyzed by NqrF, which accepts electrons from NADH and reduces ubiquinone-1 to ubisemiquinone by a one-electron transfer pathway. The polypeptide is Na(+)-translocating NADH-quinone reductase subunit F (Vibrio anguillarum (Listonella anguillarum)).